Reading from the N-terminus, the 374-residue chain is 4-galactosyl-N-acetylglucosaminide 3-alpha-L-fucosyltransferase FUT5 (374 aa).

Residues 1–15 (MDLLGAAKPQWPWRR) are Cytoplasmic-facing. A helical; Signal-anchor for type II membrane protein transmembrane segment spans residues 16-34 (CLAGLLFQLLVAVCFFSYL). Topologically, residues 35 to 374 (RVSRDDATGS…TVRSIAAWFN (340 aa)) are lumenal. 4 N-linked (GlcNAc...) asparagine glycosylation sites follow: Asn-60, Asn-105, Asn-167, and Asn-198.

This sequence belongs to the glycosyltransferase 10 family.

The protein localises to the golgi apparatus. Its subcellular location is the golgi stack membrane. It carries out the reaction a beta-D-galactosyl-(1-&gt;3)-N-acetyl-beta-D-glucosaminyl derivative + GDP-beta-L-fucose = a beta-D-galactosyl-(1-&gt;3)-[alpha-L-fucosyl-(1-&gt;4)]-N-acetyl-beta-D-glucosaminyl derivative + GDP + H(+). The catalysed reaction is an N-acetyl-alpha-neuraminyl-(2-&gt;3)-beta-D-galactosyl-(1-&gt;4)-N-acetyl-beta-D-glucosaminyl derivative + GDP-beta-L-fucose = an alpha-Neu5Ac-(2-&gt;3)-beta-D-Gal-(1-&gt;4)-[alpha-L-Fuc-(1-&gt;3)]-beta-D-GlcNAc derivative + GDP + H(+). The enzyme catalyses an alpha-Neu5Ac-(2-&gt;3)-beta-D-Gal-(1-&gt;4)-beta-D-GlcNAc-(1-&gt;3)-beta-D-Gal-(1-&gt;4)-[alpha-L-Fuc-(1-&gt;3)]-beta-D-GlcNAc derivative + GDP-beta-L-fucose = an alpha-Neu5Ac-(2-&gt;3)-beta-D-Gal-(1-&gt;4)-[alpha-L-Fuc-(1-&gt;3)]-beta-D-GlcNAc-(1-&gt;3)-beta-D-Gal-(1-&gt;4)-[alpha-L-Fuc-(1-&gt;3)]-beta-D-GlcNAc derivative + GDP + H(+). It catalyses the reaction a beta-D-galactosyl-(1-&gt;4)-N-acetyl-beta-D-glucosaminyl derivative + GDP-beta-L-fucose = a beta-D-galactosyl-(1-&gt;4)-[alpha-L-fucosyl-(1-&gt;3)]-N-acetyl-beta-D-glucosaminyl derivative + GDP + H(+). It carries out the reaction a neolactoside nLc4Cer + GDP-beta-L-fucose = a neolactoside III(3)-alpha-Fuc-nLc4Cer + GDP + H(+). The catalysed reaction is a neolactoside nLc6Cer + GDP-beta-L-fucose = beta-D-galactosyl-(1-&gt;4)-N-acetyl-beta-D-glucosaminyl-(1-&gt;3)-beta-D-galactosyl-(1-&gt;4)-[alpha-L-fucosyl-(1-&gt;3)]-N-acetyl-beta-D-glucosaminyl-(1-&gt;3)-beta-D-galactosyl-(1-&gt;4)-beta-D-glucosyl-(1&lt;-&gt;1')-ceramide + GDP + H(+). The enzyme catalyses a neolactoside nLc6Cer(d18:1(4E)) + GDP-beta-L-fucose = a neolactoside III(3)-alpha-Fuc-nLc6Cer(d18:1(4E)) + GDP + H(+). It catalyses the reaction a neolactoside nLc4Cer(d18:1(4E)) + GDP-beta-L-fucose = a neolactoside III(3)-alpha-Fuc-nLc4Cer(d18:1(4E)) + GDP + H(+). It carries out the reaction a neolactoside VI(3)-alpha-NeuNAc-nLc6Cer + GDP-beta-L-fucose = a neolactoside VI(3)-alpha-NeuAc,III(3)-alphaFuc-nLc6Cer + GDP + H(+). The catalysed reaction is beta-D-galactosyl-(1-&gt;4)-N-acetyl-D-glucosamine + GDP-beta-L-fucose = beta-D-galactosyl-(1-&gt;4)-[alpha-L-fucosyl-(1-&gt;3)]-N-acetyl-D-glucosamine + GDP + H(+). The enzyme catalyses N-acetyl-alpha-neuraminosyl-(2-&gt;3)-beta-D-galactosyl-(1-&gt;4)-N-acetyl-beta-D-glucosamine + GDP-beta-L-fucose = N-acetyl-alpha-neuraminosyl-(2-&gt;3)-beta-D-galactosyl-(1-&gt;4)-[alpha-L-fucosyl-(1-&gt;3)]-N-acetyl-beta-D-glucosamine + GDP + H(+). It catalyses the reaction alpha-L-Fuc-(1-&gt;2)-beta-D-Gal-(1-&gt;4)-D-GlcNAc + GDP-beta-L-fucose = alpha-L-Fuc-(1-&gt;2)-beta-D-Gal-(1-&gt;4)-[alpha-L-Fuc-(1-&gt;3)]-D-GlcNAc + GDP + H(+). It carries out the reaction an alpha-Neu5Ac-(2-&gt;3)-beta-D-Gal-(1-&gt;3)-D-GlcNAc derivative + GDP-beta-L-fucose = an alpha-Neu5Ac-(2-&gt;3)-beta-D-Gal-(1-&gt;3)-[alpha-L-Fuc-(1-&gt;4)]-beta-D-GlcNAc derivative + GDP + H(+). It participates in protein modification; protein glycosylation. Catalyzes preferentially the transfer of L-fucose, from a guanosine diphosphate-beta-L-fucose, to the N-acetyl-beta-D-glucosamine (GlcNAc) of an N-acetyllactosamine unit (type 2 chain) of an oligosaccharide, or a glycoprotein- and a glycolipid-linked N-acetyllactosamine unit via an alpha (1,3) linkage and participates in the surface expression of VIM-2, Lewis X/SSEA-1 and sialyl Lewis X antigens. Preferentially transfers fucose to the GlcNAc of an internal N-acetyllactosamine unit of a poly-N-acetyllactosamine chain acceptor substrate. Also catalyzes to a lesser extend the transfer of L-fucose to the GlcNAc of a type 1 (beta-D-galactosyl-(1-&gt;3)-N-acetyl-beta-D-glucosaminyl) or H-type 1 (alpha-L-Fuc-(1-&gt;2)-beta-D-Gal-(1-&gt;3)-D-GlcNAc) chain oligosaccharide via an alpha (1,4) linkage. Preferentially catalyzes sialylated type 2 oligosaccharide acceptors over neutral type 2 or H type 2 (alpha-L-Fuc-(1-&gt;2)-beta-D-Gal-(1-&gt;4)-D-GlcNAc) oligosaccharide acceptors. Lactose-based structures are also acceptor substrates. This Hylobates lar (Lar gibbon) protein is 4-galactosyl-N-acetylglucosaminide 3-alpha-L-fucosyltransferase FUT5.